Reading from the N-terminus, the 504-residue chain is 5-epiaristolochene 1,3-dihydroxylase (504 aa).

The helical transmembrane segment at 2–22 (QFFSLVSIFLFLSFLFLLRKW) threads the bilayer. Cys442 is a binding site for heme.

This sequence belongs to the cytochrome P450 family. The cofactor is heme.

The protein resides in the membrane. It carries out the reaction (+)-5-epi-aristolochene + 2 reduced [NADPH--hemoprotein reductase] + 2 O2 = capsidiol + 2 oxidized [NADPH--hemoprotein reductase] + 2 H2O + 2 H(+). With respect to regulation, inhibited by ancymidol and ketoconazole. Its function is as follows. Involved in the biosynthesis of capsidiol. Catalyzes the successive and independent hydroxylations at the C1 and C3 positions of 5-epiaristolochene. The second hydroxylation step is 8-fold more efficient than the first hydroxylation reaction. Capable of utilizing premnaspirodiene as a substrate. This Nicotiana tabacum (Common tobacco) protein is 5-epiaristolochene 1,3-dihydroxylase (CYP71D20).